Here is a 583-residue protein sequence, read N- to C-terminus: Sensor protein SrrB (583 aa).

The Cytoplasmic segment spans residues 1–11 (MMSRLNSVVIK). A helical transmembrane segment spans residues 12 to 32 (LWLTIILIVTTVLILLSIALI). The Extracellular portion of the chain corresponds to 33–174 (TFMQYYFTQE…SIEDTNNAIT (142 aa)). The chain crosses the membrane as a helical span at residues 175–195 (IITIITAVIFLTITTVFAFFL). The Cytoplasmic portion of the chain corresponds to 196–583 (SSRITKPLRR…TFIIKLPKPE (388 aa)). The region spanning 197–249 (SRITKPLRRLRDQATRVSEGDYSYKPSVTTKDEIGQLSQAFNQMSTEIEEHVD) is the HAMP domain. Residues 366 to 583 (NVSHELRTPI…TFIIKLPKPE (218 aa)) enclose the Histidine kinase domain. H369 carries the post-translational modification Phosphohistidine; by autocatalysis.

It is found in the cell membrane. The enzyme catalyses ATP + protein L-histidine = ADP + protein N-phospho-L-histidine.. In terms of biological role, member of the two-component regulatory system SrrA/SrrB, which is involved in the global regulation of staphylococcal virulence factors in response to environmental oxygen levels as well as biofilm formation. Also plays an essential role in host-derived nitric oxide resistance by regulating hmp/flavohemoglobin, an enzyme that detoxifies nitric oxide by converting it to nitrate. Functions as a sensor protein kinase which is autophosphorylated at a histidine residue and transfers its phosphate group to SrrA. In turn, SrrA binds to the upstream promoter regions of the target genes to positively and negatively regulate their expression. The chain is Sensor protein SrrB (srrB) from Staphylococcus aureus (strain MRSA252).